The primary structure comprises 130 residues: Protachykinin-1 (130 aa).

The N-terminal stretch at 1–19 (MKILVAVAVFFLVSTQLFA) is a signal peptide. A propeptide spanning residues 20-56 (EEIDANDDLNYWSDWSDSDQIKEAMPEPFEHLLQRIA) is cleaved from the precursor. Methionine amide is present on residues Met68 and Met107.

Belongs to the tachykinin family. Post-translationally, the substance P form is cleaved at Pro-59 by the prolyl endopeptidase FAP (seprase) activity (in vitro). Substance P is also cleaved and degraded by Angiotensin-converting enzyme (ACE) and neprilysin (MME).

Its subcellular location is the secreted. In terms of biological role, tachykinins are active peptides which excite neurons, evoke behavioral responses, are potent vasodilators and secretagogues, and contract (directly or indirectly) many smooth muscles. The protein is Protachykinin-1 (Tac1) of Mus musculus (Mouse).